A 448-amino-acid chain; its full sequence is Trigger factor (448 aa).

A PPIase FKBP-type domain is found at 167–253 (GSIVRVDFVE…LKDIKRRDIP (87 aa)).

This sequence belongs to the FKBP-type PPIase family. Tig subfamily.

It is found in the cytoplasm. It carries out the reaction [protein]-peptidylproline (omega=180) = [protein]-peptidylproline (omega=0). Its function is as follows. Involved in protein export. Acts as a chaperone by maintaining the newly synthesized protein in an open conformation. Functions as a peptidyl-prolyl cis-trans isomerase. This Borrelia turicatae (strain 91E135) protein is Trigger factor.